Reading from the N-terminus, the 79-residue chain is Putative defensin-like protein 80 (79 aa).

The first 26 residues, 1-26 (MDVQRSSYIFIALSIIAMFLITGVKP), serve as a signal peptide directing secretion. Cystine bridges form between cysteine 32-cysteine 65, cysteine 36-cysteine 58, cysteine 44-cysteine 63, and cysteine 48-cysteine 64.

It belongs to the DEFL family.

Its subcellular location is the secreted. This Arabidopsis thaliana (Mouse-ear cress) protein is Putative defensin-like protein 80 (LCR81).